The primary structure comprises 278 residues: Large ribosomal subunit protein uL2 (278 aa).

The interval 222–278 (GVVMNPIDHPHGGGEGRTSGGRHPVTPWGKPTKGKKTRSNKSTDKFILISRHKRKKK) is disordered.

This sequence belongs to the universal ribosomal protein uL2 family. Part of the 50S ribosomal subunit. Forms a bridge to the 30S subunit in the 70S ribosome.

Its function is as follows. One of the primary rRNA binding proteins. Required for association of the 30S and 50S subunits to form the 70S ribosome, for tRNA binding and peptide bond formation. It has been suggested to have peptidyltransferase activity; this is somewhat controversial. Makes several contacts with the 16S rRNA in the 70S ribosome. The chain is Large ribosomal subunit protein uL2 from Rhodopseudomonas palustris (strain ATCC BAA-98 / CGA009).